A 328-amino-acid chain; its full sequence is Phosphatidylglycerol--prolipoprotein diacylglyceryl transferase (328 aa).

Helical transmembrane passes span 15 to 35, 57 to 77, and 106 to 126; these read VIQG…ILIS, IFMF…STLV, and GMAI…TINT. Residue Arg156 participates in a 1,2-diacyl-sn-glycero-3-phospho-(1'-sn-glycerol) binding. A run of 2 helical transmembrane segments spans residues 242–262 and 289–309; these read GFIF…IEYL and ISMG…WIIV.

This sequence belongs to the Lgt family.

The protein resides in the cell inner membrane. The catalysed reaction is L-cysteinyl-[prolipoprotein] + a 1,2-diacyl-sn-glycero-3-phospho-(1'-sn-glycerol) = an S-1,2-diacyl-sn-glyceryl-L-cysteinyl-[prolipoprotein] + sn-glycerol 1-phosphate + H(+). The protein operates within protein modification; lipoprotein biosynthesis (diacylglyceryl transfer). Catalyzes the transfer of the diacylglyceryl group from phosphatidylglycerol to the sulfhydryl group of the N-terminal cysteine of a prolipoprotein, the first step in the formation of mature lipoproteins. The chain is Phosphatidylglycerol--prolipoprotein diacylglyceryl transferase from Borreliella burgdorferi (strain ZS7) (Borrelia burgdorferi).